Reading from the N-terminus, the 748-residue chain is ATP-dependent rRNA helicase SPB4 (748 aa).

Positions 15-43 (WAKLNPPLSPWILDVINSMGFKNMTPVQA) match the Q motif motif. In terms of domain architecture, Helicase ATP-binding spans 46-260 (IPRAVKNQDC…GLGLRNPVRI (215 aa)). 59–66 (AVTGSGKT) is a binding site for ATP. The disordered stretch occupies residues 119 to 156 (ESEEETGDVEAHAPPFASSSRSPSPQTPDKPLFPLPML). Low complexity predominate over residues 132–142 (PPFASSSRSPS). The span at 143 to 152 (PQTPDKPLFP) shows a compositional bias: pro residues. The short motif at 207 to 210 (DEAD) is the DEAD box element. In terms of domain architecture, Helicase C-terminal spans 295-460 (KTLQLIRLLL…KAQRSILDFL (166 aa)). Residues 614 to 748 (AQRADNQSSN…IGGGMFDDLE (135 aa)) are disordered. 2 stretches are compositionally biased toward basic and acidic residues: residues 626–669 (ARAE…KYEW) and 708–730 (EIGK…KESS). A compositionally biased stretch (gly residues) spans 732–748 (GGAGGGGIGGGMFDDLE).

It belongs to the DEAD box helicase family. DDX55/SPB4 subfamily. In terms of assembly, component of pre-60S ribosomal complexes.

It localises to the nucleus. The protein resides in the nucleolus. It carries out the reaction ATP + H2O = ADP + phosphate + H(+). Its function is as follows. ATP-binding RNA helicase involved in the biogenesis of 60S ribosomal subunits. Binds 90S pre-ribosomal particles and dissociates from pre-60S ribosomal particles after processing of 27SB pre-rRNA. Required for the normal formation of 18S rRNA through the processing of pre-rRNAs at sites A0, A1 and A2, and the normal formation of 25S and 5.8S rRNAs through the processing of pre-rRNAs at sites C1 and C2. The chain is ATP-dependent rRNA helicase SPB4 from Cryptococcus neoformans var. neoformans serotype D (strain B-3501A) (Filobasidiella neoformans).